The following is a 345-amino-acid chain: Protease HtpX homolog (345 aa).

A run of 2 helical transmembrane segments spans residues 6-26 (TAMLLAFMTALFMGVGYLVGG) and 27-47 (SNGMVIALLMAGGLNFFSYWN). Position 130 (His130) interacts with Zn(2+). Glu131 is an active-site residue. His134 contacts Zn(2+). The next 2 membrane-spanning stretches (helical) occupy residues 145 to 165 (LTATIAGAISMLGNFAFFMGG) and 179 to 199 (IGGLLALFVAPFAAMLVQMAI). A Zn(2+)-binding site is contributed by Glu204.

The protein belongs to the peptidase M48B family. Requires Zn(2+) as cofactor.

The protein resides in the cell inner membrane. This is Protease HtpX homolog from Bartonella henselae (strain ATCC 49882 / DSM 28221 / CCUG 30454 / Houston 1) (Rochalimaea henselae).